The sequence spans 97 residues: Co-chaperonin GroES (97 aa).

The protein belongs to the GroES chaperonin family. Heptamer of 7 subunits arranged in a ring. Interacts with the chaperonin GroEL.

It localises to the cytoplasm. Functionally, together with the chaperonin GroEL, plays an essential role in assisting protein folding. The GroEL-GroES system forms a nano-cage that allows encapsulation of the non-native substrate proteins and provides a physical environment optimized to promote and accelerate protein folding. GroES binds to the apical surface of the GroEL ring, thereby capping the opening of the GroEL channel. This Wigglesworthia glossinidia brevipalpis protein is Co-chaperonin GroES.